A 152-amino-acid polypeptide reads, in one-letter code: Small ribosomal subunit protein uS19z (152 aa).

This sequence belongs to the universal ribosomal protein uS19 family.

The protein localises to the cytoplasm. The chain is Small ribosomal subunit protein uS19z (RPS15B) from Arabidopsis thaliana (Mouse-ear cress).